The chain runs to 317 residues: Egg-laying defective protein 26 (317 aa).

Residues 156-277 (EVNVSGVKFY…CSTGVPFSYD (122 aa)) form the LRAT domain. Catalysis depends on residues His-166 and His-178. Catalysis depends on Cys-261, which acts as the Acyl-thioester intermediate.

As to expression, highly expressed in the cells of the spermatheca, the mouth, and the lining of the pharynx, the rectum, and the excretory canal. Also expressed in the pharyngeal intestinal junction cell.

The protein localises to the apical cell membrane. In terms of biological role, putative acyltransferase. Plays a role in the morphogenesis of a vulval toroid cell, vulF, which is located where the vulva and the uterus connect. Not required for specifying vulval cell fate. In Caenorhabditis elegans, this protein is Egg-laying defective protein 26.